Here is a 535-residue protein sequence, read N- to C-terminus: F-box protein At1g56610 (535 aa).

Transmembrane regions (helical) follow at residues 3–23 (FALVLIFLFGFYLFLMKSSSI), 37–57 (VLLLVLRFLFSLIQILILCLF), and 82–102 (LAPHILSWLPTKTAVTVSLLF). Residues 73-119 (TELCDLPKCLAPHILSWLPTKTAVTVSLLFMKGWWRSEMKNLSSLKF) enclose the F-box; degenerate domain.

Part of a SCF (ASK-cullin-F-box) protein ligase complex. Interacts with ASK4.

It localises to the membrane. It participates in protein modification; protein ubiquitination. In terms of biological role, component of SCF(ASK-cullin-F-box) E3 ubiquitin ligase complexes, which may mediate the ubiquitination and subsequent proteasomal degradation of target proteins. The sequence is that of F-box protein At1g56610 from Arabidopsis thaliana (Mouse-ear cress).